The sequence spans 180 residues: O-acetyl-ADP-ribose deacetylase (180 aa).

One can recognise a Macro domain in the interval 1–175 (MKPQIEVVVG…LYQRLLIQRG (175 aa)). Substrate-binding positions include 11 to 12 (DI), Asn25, 33 to 35 (GVD), and 122 to 126 (STGVY). Asp35 serves as the catalytic Proton acceptor.

It belongs to the MacroD-type family. YmdB subfamily. As to quaternary structure, homodimer. Interacts with RNase III.

It carries out the reaction 3''-O-acetyl-ADP-D-ribose + H2O = ADP-D-ribose + acetate + H(+). The catalysed reaction is 2''-O-acetyl-ADP-D-ribose + H2O = ADP-D-ribose + acetate + H(+). In terms of biological role, deacetylates O-acetyl-ADP ribose to yield ADP-ribose and free acetate. Down-regulates ribonuclease 3 (RNase III) activity. Acts by interacting directly with the region of the ribonuclease that is required for dimerization/activation. The chain is O-acetyl-ADP-ribose deacetylase from Enterobacter sp. (strain 638).